A 1001-amino-acid chain; its full sequence is Serine/threonine-protein kinase TAO1 (1001 aa).

S9 carries the phosphoserine modification. Residues 28 to 281 (FTDLREIGHG…SEELLKHIFV (254 aa)) enclose the Protein kinase domain. ATP-binding positions include 34 to 42 (IGHGSFGAV) and K57. D151 acts as the Proton acceptor in catalysis. Positions 324 to 433 (PAVEAQEEEE…QVSRHKSHYR (110 aa)) are disordered. Over residues 350 to 373 (SNQSIPSMSISASSQSSSVNSLPD) the composition is skewed to low complexity. 2 stretches are compositionally biased toward basic and acidic residues: residues 375-388 (SDDK…EGDH) and 399-416 (LKPE…RTRA). Phosphoserine occurs at positions 421 and 445. Residues 458–651 (SELREQMSGY…QTQKDLEHAM (194 aa)) are a coiled coil. A disordered region spans residues 567-587 (KEELNENQSTPKKEKQEWLSK). Residues 577–587 (PKKEKQEWLSK) show a composition bias toward basic and acidic residues. T669 is modified (phosphothreonine). Residues 754–877 (KAVLKRLKEE…LERQAREIEA (124 aa)) are a coiled coil. The segment at 911-1001 (SHNPTGGPGP…ISNGSHMSYT (91 aa)) is disordered. Position 965 is a phosphoserine (S965). Positions 975-1001 (GGRTEQGMSRSTSVTSQISNGSHMSYT) are enriched in polar residues.

It belongs to the protein kinase superfamily. STE Ser/Thr protein kinase family. STE20 subfamily. As to quaternary structure, self-associates. Interacts with MAP2K3. Interacts with SPRED1. Interacts with TESK1; the interaction inhibits TAOK1 kinase activity. Interacts with MAP3K7. Proteolytically processed by caspase-3 (CASP3). Post-translationally, autophosphorylated. Phosphorylated by ATM in response to DNA damage. Phosphorylated by LRRK2. As to expression, highly expressed in the testis, and to a lower extent also expressed in brain, placenta, colon and skeletal muscle.

The protein resides in the cytoplasm. It catalyses the reaction L-seryl-[protein] + ATP = O-phospho-L-seryl-[protein] + ADP + H(+). The enzyme catalyses L-threonyl-[protein] + ATP = O-phospho-L-threonyl-[protein] + ADP + H(+). Its activity is regulated as follows. Serine/threonine-protein kinase activity is inhibited by SPRED1. Serine/threonine-protein kinase involved in various processes such as p38/MAPK14 stress-activated MAPK cascade, DNA damage response and regulation of cytoskeleton stability. Phosphorylates MAP2K3, MAP2K6 and MARK2. Acts as an activator of the p38/MAPK14 stress-activated MAPK cascade by mediating phosphorylation and subsequent activation of the upstream MAP2K3 and MAP2K6 kinases. Involved in G-protein coupled receptor signaling to p38/MAPK14. In response to DNA damage, involved in the G2/M transition DNA damage checkpoint by activating the p38/MAPK14 stress-activated MAPK cascade, probably by mediating phosphorylation of MAP2K3 and MAP2K6. Acts as a regulator of cytoskeleton stability by phosphorylating 'Thr-208' of MARK2, leading to activate MARK2 kinase activity and subsequent phosphorylation and detachment of MAPT/TAU from microtubules. Also acts as a regulator of apoptosis: regulates apoptotic morphological changes, including cell contraction, membrane blebbing and apoptotic bodies formation via activation of the MAPK8/JNK cascade. Plays an essential role in the regulation of neuronal development in the central nervous system. Also plays a role in the regulation of neuronal migration to the cortical plate. The protein is Serine/threonine-protein kinase TAO1 (TAOK1) of Homo sapiens (Human).